The primary structure comprises 267 residues: MNWGEQVASRRQRVHEQRPLVHHITNLVVTNLTANVTLAIGASPVMAYAREEVADMARLAQAVVLNMGTLTGDVVEAMLLAGKAANNAGIPVVFDPVGAGATPFRTRTAQKIIKELHIDILRGNASEIASIGGFGGHTKGVDAAGAPARVAEMVKQVARDLNTVVAVTGATDYISDGERLIAVDNGHPLLTFVTGTGCSATSIIAAFRAVEEDGVTASTAALAYYGLAAERAAAVSQGPASFQVALLDTLYNLAGEELARGVKIRLL.

Met46 contacts substrate. Residues Arg122 and Thr168 each contribute to the ATP site. Gly195 serves as a coordination point for substrate.

Belongs to the Thz kinase family. Mg(2+) is required as a cofactor.

It carries out the reaction 5-(2-hydroxyethyl)-4-methylthiazole + ATP = 4-methyl-5-(2-phosphooxyethyl)-thiazole + ADP + H(+). Its pathway is cofactor biosynthesis; thiamine diphosphate biosynthesis; 4-methyl-5-(2-phosphoethyl)-thiazole from 5-(2-hydroxyethyl)-4-methylthiazole: step 1/1. Catalyzes the phosphorylation of the hydroxyl group of 4-methyl-5-beta-hydroxyethylthiazole (THZ). The polypeptide is Hydroxyethylthiazole kinase (Moorella thermoacetica (strain ATCC 39073 / JCM 9320)).